A 347-amino-acid chain; its full sequence is UDP-3-O-acylglucosamine N-acyltransferase (347 aa).

His-241 serves as the catalytic Proton acceptor.

The protein belongs to the transferase hexapeptide repeat family. LpxD subfamily. In terms of assembly, homotrimer.

The enzyme catalyses a UDP-3-O-[(3R)-3-hydroxyacyl]-alpha-D-glucosamine + a (3R)-hydroxyacyl-[ACP] = a UDP-2-N,3-O-bis[(3R)-3-hydroxyacyl]-alpha-D-glucosamine + holo-[ACP] + H(+). It functions in the pathway bacterial outer membrane biogenesis; LPS lipid A biosynthesis. In terms of biological role, catalyzes the N-acylation of UDP-3-O-acylglucosamine using 3-hydroxyacyl-ACP as the acyl donor. Is involved in the biosynthesis of lipid A, a phosphorylated glycolipid that anchors the lipopolysaccharide to the outer membrane of the cell. This Neisseria gonorrhoeae (strain ATCC 700825 / FA 1090) protein is UDP-3-O-acylglucosamine N-acyltransferase.